The following is a 388-amino-acid chain: Acetate kinase (388 aa).

Asn7 is a Mg(2+) binding site. Lys14 is an ATP binding site. Arg76 is a substrate binding site. Asp133 serves as the catalytic Proton donor/acceptor. Residues 193-197, 267-269, and 315-319 each bind ATP; these read HLGNG, DMR, and GIGEN. Glu374 contributes to the Mg(2+) binding site.

This sequence belongs to the acetokinase family. In terms of assembly, homodimer. The cofactor is Mg(2+). Requires Mn(2+) as cofactor.

The protein localises to the cytoplasm. The catalysed reaction is acetate + ATP = acetyl phosphate + ADP. It participates in metabolic intermediate biosynthesis; acetyl-CoA biosynthesis; acetyl-CoA from acetate: step 1/2. Functionally, catalyzes the formation of acetyl phosphate from acetate and ATP. Can also catalyze the reverse reaction. The polypeptide is Acetate kinase (Micrococcus luteus (strain ATCC 4698 / DSM 20030 / JCM 1464 / CCM 169 / CCUG 5858 / IAM 1056 / NBRC 3333 / NCIMB 9278 / NCTC 2665 / VKM Ac-2230) (Micrococcus lysodeikticus)).